Reading from the N-terminus, the 479-residue chain is Probable xyloglucan galactosyltransferase GT15 (479 aa).

Residues 1-20 (MKNNNSSSVSIENHPWKKKP) are Cytoplasmic-facing. Residues 21-40 (TTLLLFLSLLSISLLLLRLS) form a helical; Signal-anchor for type II membrane protein membrane-spanning segment. Residues 41–479 (QDKIILITTT…GIRRNEFKTD (439 aa)) lie on the Lumenal side of the membrane. Residues N155, N242, N285, and N391 are each glycosylated (N-linked (GlcNAc...) asparagine).

Belongs to the glycosyltransferase 47 family. As to expression, expressed in roots, hypocotyls, cotyledons, leaves, stems and sepals.

The protein localises to the golgi apparatus membrane. Functions in xyloglucan synthesis by adding side chains to the xylosylated glucan backbone. Involved in the galactosylation of hemicellulose xyloglucan. The sequence is that of Probable xyloglucan galactosyltransferase GT15 from Arabidopsis thaliana (Mouse-ear cress).